The following is a 265-amino-acid chain: Triosephosphate isomerase (265 aa).

8-10 is a binding site for substrate; it reads NWK. H103 (electrophile) is an active-site residue. The active-site Proton acceptor is E182. Substrate is bound by residues G188, S226, and 247 to 248; that span reads GG.

It belongs to the triosephosphate isomerase family. In terms of assembly, homodimer.

It localises to the cytoplasm. It catalyses the reaction D-glyceraldehyde 3-phosphate = dihydroxyacetone phosphate. The protein operates within carbohydrate biosynthesis; gluconeogenesis. Its pathway is carbohydrate degradation; glycolysis; D-glyceraldehyde 3-phosphate from glycerone phosphate: step 1/1. In terms of biological role, involved in the gluconeogenesis. Catalyzes stereospecifically the conversion of dihydroxyacetone phosphate (DHAP) to D-glyceraldehyde-3-phosphate (G3P). The protein is Triosephosphate isomerase of Psychrobacter sp. (strain PRwf-1).